The sequence spans 452 residues: MNIFGTDGVRGRANVYPMDPITVLRLGMAIGLEARKVGTQVVLGKDTRISGYMVESALVSGLVAMGVNVGLLGPMPTAAIATLVRNLRASMGVVISASHNSYLDNGVKIFDSEGIKIPLELEEVLESNVRAELSSDLAQVRGMGKVYRIAGAVGRYIEFVKGTFPKRLKLSGMKIVVDCANGAAYHIGGEVFWELGADVVVIGNKPDGLNINHNCGSLHPEGMVQKVLEEGADIGIALDGDADRVVVCDEKGRLVDGDQVIASIMRHLRATKSITDAAVTTMSSKSIDSYARELGVRLHRSEVGDRHLVDTMRQHSCSVGGEKSGHIILWEHSTTSDSLVAALQILSIMLLENKSASSIFGDFVPMPRVHRDIPYSMEFDHIARLIGPTLSDVEQALGRVNGRVIFRRSGTERLIRCVIEGEDPKLVALVADELSIKLRELGVENGVEPEMQ.

Catalysis depends on Ser98, which acts as the Phosphoserine intermediate. Residues Ser98, Asp239, Asp241, and Asp243 each coordinate Mg(2+). At Ser98 the chain carries Phosphoserine.

The protein belongs to the phosphohexose mutase family. Mg(2+) serves as cofactor. Post-translationally, activated by phosphorylation.

It carries out the reaction alpha-D-glucosamine 1-phosphate = D-glucosamine 6-phosphate. Its function is as follows. Catalyzes the conversion of glucosamine-6-phosphate to glucosamine-1-phosphate. The polypeptide is Phosphoglucosamine mutase (Anaplasma marginale (strain Florida)).